The following is a 257-amino-acid chain: Regulator of G-protein signaling 7-binding protein (257 aa).

Disordered stretches follow at residues 1–45 (MSSA…SAHK) and 174–196 (ETPA…WQVS). Residues 32–45 (DWERRGSGSESAHK) are compositionally biased toward basic and acidic residues. Residues 180–192 (DSSSSPVDSQQHS) are compositionally biased toward low complexity. A Nuclear localization signal motif is present at residues 242 to 247 (RRRKRR). 2 S-palmitoyl cysteine lipidation sites follow: Cys252 and Cys253.

The protein belongs to the RGS7BP/RGS9BP family. In terms of assembly, interacts with 'R7' family proteins RGS6, RGS7, RGS9 and RGS11. Component of some R7-Gbeta5 complex composed of some R7 protein (RGS6, RGS7, RGS9 or RGS11), Gbeta5 (GNB5) and RGS7BP. Post-translationally, palmitoylated. Undergoes rapid palmitoylation turnover. De novo and turnover palmitoylation are both mediated by ZDHHC2. Palmitoylation regulates the cell membrane and nuclear shuttling and the regulation of GPCR signaling. Upon depalmitoylation, it is targeted from the plasma membrane into the nucleus. GPCR signaling inhibits depalmitoylation and promotes localization to the plasma membrane.

Its subcellular location is the nucleus. The protein localises to the cytoplasm. The protein resides in the cell membrane. Functionally, regulator of G protein-coupled receptor (GPCR) signaling. Regulatory subunit of the R7-Gbeta5 complexes that acts by controlling the subcellular location of the R7-Gbeta5 complexes. When palmitoylated, it targets the R7-Gbeta5 complexes to the plasma membrane, leading to inhibit G protein alpha subunits. When it is unpalmitoylated, the R7-Gbeta5 complexes undergo a nuclear/cytoplasmic shuttling. May also act by controlling the proteolytic stability of R7 proteins, probably by protecting them from degradation. This is Regulator of G-protein signaling 7-binding protein (RGS7BP) from Homo sapiens (Human).